A 230-amino-acid polypeptide reads, in one-letter code: 7-cyano-7-deazaguanine synthase (230 aa).

8 to 18 (LSGGMDSAVVT) is an ATP binding site. The Zn(2+) site is built by Cys186, Cys196, Cys199, and Cys202.

The protein belongs to the QueC family. Zn(2+) serves as cofactor.

The enzyme catalyses 7-carboxy-7-deazaguanine + NH4(+) + ATP = 7-cyano-7-deazaguanine + ADP + phosphate + H2O + H(+). It functions in the pathway purine metabolism; 7-cyano-7-deazaguanine biosynthesis. Functionally, catalyzes the ATP-dependent conversion of 7-carboxy-7-deazaguanine (CDG) to 7-cyano-7-deazaguanine (preQ(0)). In Xylella fastidiosa (strain M12), this protein is 7-cyano-7-deazaguanine synthase.